The chain runs to 245 residues: NAD-dependent protein deacylase 1 (245 aa).

The Deacetylase sirtuin-type domain occupies 1–243 (MDEKLLKTIA…DELVRHVRKA (243 aa)). 20–39 (GAGVSAESGIPTFRGKDGLW) is a binding site for NAD(+). Positions 64 and 67 each coordinate substrate. 98–101 (QNVD) provides a ligand contact to NAD(+). Residue H116 is the Proton acceptor of the active site. Zn(2+) is bound by residues C124, C127, C145, and C148. NAD(+)-binding positions include 185–187 (GTS), 211–213 (NPD), and A229.

Belongs to the sirtuin family. Class III subfamily. Zn(2+) serves as cofactor.

The protein localises to the cytoplasm. It carries out the reaction N(6)-acetyl-L-lysyl-[protein] + NAD(+) + H2O = 2''-O-acetyl-ADP-D-ribose + nicotinamide + L-lysyl-[protein]. The catalysed reaction is N(6)-succinyl-L-lysyl-[protein] + NAD(+) + H2O = 2''-O-succinyl-ADP-D-ribose + nicotinamide + L-lysyl-[protein]. Functionally, NAD-dependent lysine deacetylase and desuccinylase that specifically removes acetyl and succinyl groups on target proteins. Modulates the activities of several proteins which are inactive in their acylated form. Deacetylates the N-terminal lysine residue of Alba, the major archaeal chromatin protein and that, in turn, increases Alba's DNA binding affinity, thereby repressing transcription. This chain is NAD-dependent protein deacylase 1, found in Archaeoglobus fulgidus (strain ATCC 49558 / DSM 4304 / JCM 9628 / NBRC 100126 / VC-16).